We begin with the raw amino-acid sequence, 196 residues long: dCTP deaminase, dUMP-forming (196 aa).

DCTP-binding positions include 101–106 (KSSLGR), Asp-119, 127–129 (TLE), Gln-148, Tyr-162, and Gln-174. Residue Glu-129 is the Proton donor/acceptor of the active site.

Belongs to the dCTP deaminase family. In terms of assembly, homotrimer.

It carries out the reaction dCTP + 2 H2O = dUMP + NH4(+) + diphosphate. Its pathway is pyrimidine metabolism; dUMP biosynthesis; dUMP from dCTP: step 1/1. Functionally, bifunctional enzyme that catalyzes both the deamination of dCTP to dUTP and the hydrolysis of dUTP to dUMP without releasing the toxic dUTP intermediate. In Thermobifida fusca (strain YX), this protein is dCTP deaminase, dUMP-forming.